We begin with the raw amino-acid sequence, 603 residues long: UvrABC system protein C (603 aa).

The 78-residue stretch at Asp-15–Ile-92 folds into the GIY-YIG domain. Positions Lys-197 to Thr-232 constitute a UVR domain.

The protein belongs to the UvrC family. In terms of assembly, interacts with UvrB in an incision complex.

The protein resides in the cytoplasm. Functionally, the UvrABC repair system catalyzes the recognition and processing of DNA lesions. UvrC both incises the 5' and 3' sides of the lesion. The N-terminal half is responsible for the 3' incision and the C-terminal half is responsible for the 5' incision. This is UvrABC system protein C from Listeria welshimeri serovar 6b (strain ATCC 35897 / DSM 20650 / CCUG 15529 / CIP 8149 / NCTC 11857 / SLCC 5334 / V8).